The sequence spans 138 residues: Small ribosomal subunit protein uS11c (138 aa).

The tract at residues 1–24 (MAKPIPKVGSRRNGRSSARKSARR) is disordered. Basic residues predominate over residues 9-24 (GSRRNGRSSARKSARR).

The protein belongs to the universal ribosomal protein uS11 family. Part of the 30S ribosomal subunit.

Its subcellular location is the plastid. The protein localises to the chloroplast. In Gossypium hirsutum (Upland cotton), this protein is Small ribosomal subunit protein uS11c.